The sequence spans 210 residues: Large ribosomal subunit protein uL3 (210 aa).

Position 151 is an N5-methylglutamine (glutamine 151).

Belongs to the universal ribosomal protein uL3 family. Part of the 50S ribosomal subunit. Forms a cluster with proteins L14 and L19. In terms of processing, methylated by PrmB.

Its function is as follows. One of the primary rRNA binding proteins, it binds directly near the 3'-end of the 23S rRNA, where it nucleates assembly of the 50S subunit. This Aeromonas hydrophila subsp. hydrophila (strain ATCC 7966 / DSM 30187 / BCRC 13018 / CCUG 14551 / JCM 1027 / KCTC 2358 / NCIMB 9240 / NCTC 8049) protein is Large ribosomal subunit protein uL3.